Reading from the N-terminus, the 384-residue chain is Kinesin-like protein KIF25 (384 aa).

The interval 1–20 (MTWTSGQLQREKQARPGSGA) is disordered. A Kinesin motor domain is found at 7-363 (QLQREKQARP…LGFGIRARQV (357 aa)). 65–72 (GQTGSGKS) contributes to the ATP binding site. Disordered stretches follow at residues 217–256 (DQACSATLPREQTEAGRAGRSRRASQGALAPQLVPGNPAG) and 362–384 (QVQRGPARKKPPSSQTEGKRRPD).

The protein belongs to the TRAFAC class myosin-kinesin ATPase superfamily. Kinesin family. Homotetramer.

Its subcellular location is the cytoplasm. It localises to the cytoskeleton. The protein localises to the microtubule organizing center. It is found in the centrosome. Functionally, minus-end microtubule-dependent motor protein. Acts as a negative regulator of centrosome separation required to prevent premature centrosome separation during interphase. Required to maintain a centered nucleus to ensure that the spindle is stably oriented at the onset of mitosis. May also act as a negative regulator of amino acid starvation-induced autophagy. This Homo sapiens (Human) protein is Kinesin-like protein KIF25.